The sequence spans 240 residues: Probable alpha-aspartyl dipeptidase (240 aa).

Catalysis depends on charge relay system residues Ser125, Asp140, and His162.

This sequence belongs to the peptidase S51 family.

Its subcellular location is the cytoplasm. The catalysed reaction is Dipeptidase E catalyzes the hydrolysis of dipeptides Asp-|-Xaa. It does not act on peptides with N-terminal Glu, Asn or Gln, nor does it cleave isoaspartyl peptides.. Its function is as follows. Hydrolyzes dipeptides containing N-terminal aspartate residues. The chain is Probable alpha-aspartyl dipeptidase from Drosophila melanogaster (Fruit fly).